A 353-amino-acid polypeptide reads, in one-letter code: Uroporphyrinogen decarboxylase (353 aa).

Substrate-binding positions include 30–34, Asp-79, Tyr-154, Ser-209, and His-332; that span reads RQAGR.

This sequence belongs to the uroporphyrinogen decarboxylase family. As to quaternary structure, homodimer.

The protein localises to the cytoplasm. The enzyme catalyses uroporphyrinogen III + 4 H(+) = coproporphyrinogen III + 4 CO2. It participates in porphyrin-containing compound metabolism; protoporphyrin-IX biosynthesis; coproporphyrinogen-III from 5-aminolevulinate: step 4/4. Functionally, catalyzes the decarboxylation of four acetate groups of uroporphyrinogen-III to yield coproporphyrinogen-III. This is Uroporphyrinogen decarboxylase from Mycolicibacterium smegmatis (strain ATCC 700084 / mc(2)155) (Mycobacterium smegmatis).